The chain runs to 1054 residues: Trehalose synthase complex regulatory subunit TPS3 (1054 aa).

Residues 112 to 133 are disordered; that stretch reads AANSGIPPANNPVSSGSTAQRP. Positions 122 to 132 are enriched in polar residues; the sequence is NPVSSGSTAQR. Phosphoserine is present on residues Ser-148, Ser-150, and Ser-181. 2 disordered regions span residues 155–203 and 223–250; these read ASSI…PVSK and QQQA…SSSN. A compositionally biased stretch (polar residues) spans 170-182; the sequence is LSSSLMKNPNLSF. Residues 235–249 show a composition bias toward low complexity; that stretch reads SGSTAGDSSIASSSS. Thr-265 carries the phosphothreonine modification. Phosphoserine is present on residues Ser-267 and Ser-273. A glycosyltransferase region spans residues 287-778; that stretch reads KFGGYSNNAK…SNQETSTVFN (492 aa). Ser-960 is modified (phosphoserine).

The protein in the N-terminal section; belongs to the glycosyltransferase 20 family. The trehalose synthase complex is composed of the two catalytic subunits TPS1 and TPS2 and at least one of the two regulatory subunits TPS3 or TSL1.

It is found in the cytoplasm. Functionally, regulatory subunit of the trehalose synthase complex that catalyzes the production of trehalose from glucose-6-phosphate and UDP-glucose in a two step process. May stabilize the trehalose synthase complex. The protein is Trehalose synthase complex regulatory subunit TPS3 (TPS3) of Saccharomyces cerevisiae (strain ATCC 204508 / S288c) (Baker's yeast).